Here is a 381-residue protein sequence, read N- to C-terminus: Neutral protease 2 homolog mep20 (381 aa).

The signal sequence occupies residues 1 to 19 (MRFTALASAILPLACNVLA). Positions 20 to 193 (LPAKTGEAPK…ASAVKPLDKR (174 aa)) are excised as a propeptide. Intrachain disulfides connect C199–C271 and C278–C296. Position 321 (H321) interacts with Zn(2+). Residue E322 is part of the active site. Zn(2+) is bound by residues H325 and D336.

It belongs to the peptidase M35 family. Zn(2+) serves as cofactor.

The enzyme catalyses Preferential cleavage of bonds with hydrophobic residues in P1'. Also 3-Asn-|-Gln-4 and 8-Gly-|-Ser-9 bonds in insulin B chain.. Its function is as follows. Secreted metalloproteinase that allows assimilation of proteinaceous substrates. Shows high activities on basic nuclear substrates such as histone and protamine. This is Neutral protease 2 homolog mep20 (mep20) from Aspergillus flavus.